The chain runs to 198 residues: Recombination protein RecR (198 aa).

A C4-type zinc finger spans residues 57-72; that stretch reads CAMCNTFTEHEVCETC. In terms of domain architecture, Toprim spans 80-175; that stretch reads ALLCVVETPG…KVSRLARGVP (96 aa).

It belongs to the RecR family.

May play a role in DNA repair. It seems to be involved in an RecBC-independent recombinational process of DNA repair. It may act with RecF and RecO. The protein is Recombination protein RecR of Janthinobacterium sp. (strain Marseille) (Minibacterium massiliensis).